The following is a 325-amino-acid chain: Coiled-coil domain-containing protein 160 (325 aa).

Disordered regions lie at residues 18-45 and 81-123; these read SAQD…KGME and ENKR…CSTD. Residues 81 to 91 are compositionally biased toward basic and acidic residues; that stretch reads ENKRNISKNET. A compositionally biased stretch (polar residues) spans 92 to 123; sequence DTNSASYESSNVDVTTEESFNSTEDNSTCSTD. Positions 144–288 form a coiled coil; the sequence is KLCLNLLNEE…SVIKNELRTE (145 aa).

The protein belongs to the CCDC160 family.

The sequence is that of Coiled-coil domain-containing protein 160 (CCDC160) from Homo sapiens (Human).